Consider the following 3135-residue polypeptide: Beauvericin nonribosomal cyclodepsipeptide synthetase BEA1 (3135 aa).

Positions 70 to 458 are condensation 1; that stretch reads HVAYEISNDI…QRLRGSPDKL (389 aa). The interval 196–228 is disordered; the sequence is LSNRPYTPESSDPEDDGLSLTPTDGSKTPETEG. The segment at 499–896 is adenylation 1; that stretch reads SLSPSKVAIC…GRMDSQVKIR (398 aa). One can recognise a Carrier 1 domain in the interval 1021 to 1097; the sequence is STTTSSQSKL…GLEAIVNGSA (77 aa). Residue S1058 is modified to O-(pantetheine 4'-phosphoryl)serine. The interval 1115-1542 is condensation 2; sequence SYSQGRLWFL…NIPISVLPLT (428 aa). Residues 1571–1974 form an adenylation 2 region; the sequence is FRTQVAAYPD…GRMDTQFKIR (404 aa). Positions 2042-2182 are S-adenosyl-L-methionine-dependent N-methyltransferase; the sequence is MYADIGDIDP…FPSPEYLAQV (141 aa). Carrier domains follow at residues 2509 to 2583 and 2603 to 2677; these read VPIS…REGL and APRT…ESTD. 2 positions are modified to O-(pantetheine 4'-phosphoryl)serine: S2543 and S2637. Residues 2721 to 3127 form a condensation 3 region; sequence QDMYQSTQMQ…QYFLEEVCNT (407 aa).

It belongs to the NRP synthetase family.

The catalysed reaction is 3 (R)-2-hydroxy-3-methylbutanoate + 3 L-phenylalanine + 3 S-adenosyl-L-methionine + 6 ATP = beauvericin + 6 AMP + 3 S-adenosyl-L-homocysteine + 6 diphosphate + 6 H(+). In terms of biological role, beauvericin nonribosomal cyclodepsipeptide synthetase; part of the gene cluster that mediates the biosynthesis of beauvericin (BEA), a non-ribosomal cyclic hexadepsipeptide that shows antibiotic, antifungal, insecticidal, and cancer cell antiproliferative and antihaptotactic activity. Ketoisovalerate reductase BEA2 catalyzes the NADPH-specific reduction of ketoisovaleric acid to hydroxyisovalerate, a precursor for beauvericin biosynthesis. The nonribosomal cyclodepsipeptide synthetase BEA1 then catalyzes the formation of beauvericin via condensation and cyclization of 3 dipeptidol monomers, each composed of one unit of hydroxyisovalerate and one unit of N-methyl-phenylalanine. This Gibberella fujikuroi (strain CBS 195.34 / IMI 58289 / NRRL A-6831) (Bakanae and foot rot disease fungus) protein is Beauvericin nonribosomal cyclodepsipeptide synthetase BEA1.